A 69-amino-acid polypeptide reads, in one-letter code: MNRKYNFNDESSMSPQAKAAMYAANKKSDARRRGKVGKEQWEKEMEQYNIQKAQFEKELKEKKEKELKK.

Residues 21–42 (MYAANKKSDARRRGKVGKEQWE) form a disordered region. Residues 35–69 (KVGKEQWEKEMEQYNIQKAQFEKELKEKKEKELKK) are a coiled coil.

This is an uncharacterized protein from Acheta domesticus (House cricket).